Here is a 765-residue protein sequence, read N- to C-terminus: 5-methyltetrahydropteroyltriglutamate--homocysteine methyltransferase (765 aa).

Residues 18 to 21 and Lys-114 contribute to the 5-methyltetrahydropteroyltri-L-glutamate site; that span reads REWK. Residues 437–439 and Glu-490 contribute to the L-homocysteine site; that span reads IGS. Residues 437–439 and Glu-490 contribute to the L-methionine site; that span reads IGS. Trp-567 contacts 5-methyltetrahydropteroyltri-L-glutamate. L-homocysteine is bound at residue Asp-605. An L-methionine-binding site is contributed by Asp-605. A 5-methyltetrahydropteroyltri-L-glutamate-binding site is contributed by Glu-611. Zn(2+) contacts are provided by His-647, Cys-649, and Glu-671. The active-site Proton donor is the His-700. Position 732 (Cys-732) interacts with Zn(2+).

It belongs to the vitamin-B12 independent methionine synthase family. Zn(2+) is required as a cofactor.

The enzyme catalyses 5-methyltetrahydropteroyltri-L-glutamate + L-homocysteine = tetrahydropteroyltri-L-glutamate + L-methionine. It participates in amino-acid biosynthesis; L-methionine biosynthesis via de novo pathway; L-methionine from L-homocysteine (MetE route): step 1/1. Its function is as follows. Catalyzes the transfer of a methyl group from 5-methyltetrahydrofolate to homocysteine resulting in methionine formation. The chain is 5-methyltetrahydropteroyltriglutamate--homocysteine methyltransferase from Listeria innocua serovar 6a (strain ATCC BAA-680 / CLIP 11262).